A 146-amino-acid polypeptide reads, in one-letter code: Probable calcium-binding protein CML40 (146 aa).

One can recognise an EF-hand 1 domain in the interval 7 to 42 (NKRDEYQRVFSCFDKSHQGKVSVSTIERCVDAIKSG). The tract at residues 44–65 (RAVVDQEDTTNPNPEESTDDKS) is disordered. Positions 116–146 (KSLKDCEVMISQFDINRDGIINFDEFRAMMQ) constitute an EF-hand 2 domain. Positions 129, 131, 133, and 140 each coordinate Ca(2+).

Its function is as follows. Potential calcium sensor. The protein is Probable calcium-binding protein CML40 (CML40) of Arabidopsis thaliana (Mouse-ear cress).